Here is a 544-residue protein sequence, read N- to C-terminus: Chaperonin GroEL (544 aa).

ATP-binding positions include 30-33 (TLGP), Lys-51, 87-91 (DGTTT), Gly-415, 481-483 (DAL), and Asp-497.

This sequence belongs to the chaperonin (HSP60) family. In terms of assembly, forms a cylinder of 14 subunits composed of two heptameric rings stacked back-to-back. Interacts with the co-chaperonin GroES.

The protein localises to the cytoplasm. The catalysed reaction is ATP + H2O + a folded polypeptide = ADP + phosphate + an unfolded polypeptide.. Functionally, together with its co-chaperonin GroES, plays an essential role in assisting protein folding. The GroEL-GroES system forms a nano-cage that allows encapsulation of the non-native substrate proteins and provides a physical environment optimized to promote and accelerate protein folding. This Chlamydia muridarum (strain MoPn / Nigg) protein is Chaperonin GroEL.